The sequence spans 203 residues: Recombination protein RecR (203 aa).

Residues 57–72 (CARCNTFSETELCVLC) form a C4-type zinc finger. In terms of domain architecture, Toprim spans 80–175 (DVLCVVEMPA…SVSRIARGLP (96 aa)).

The protein belongs to the RecR family.

Functionally, may play a role in DNA repair. It seems to be involved in an RecBC-independent recombinational process of DNA repair. It may act with RecF and RecO. This Laribacter hongkongensis (strain HLHK9) protein is Recombination protein RecR.